Consider the following 284-residue polypeptide: Probable palmitoyltransferase ZDHHC24 (284 aa).

The Cytoplasmic portion of the chain corresponds to 1-18; the sequence is MGEPWAARGTEGAPARMP. A helical transmembrane segment spans residues 19-39; the sequence is VVFTALWAAVVVLELTYVMVL. At 40–52 the chain is on the extracellular side; that stretch reads GPGPPPLEPLARA. The helical transmembrane segment at 53 to 73 threads the bilayer; it reads LQLALAAYQLLNLLGNMGLFL. Topologically, residues 74 to 137 are cytoplasmic; the sequence is RSDPSIRGVM…GRCVGFHNYR (64 aa). The DHHC domain maps to 94–144; that stretch reads AYCYQCQSQVPPRSGHCSACRVCILRRDHHCRLLGRCVGFHNYRPFLCLLL. Cysteine 124 serves as the catalytic S-palmitoyl cysteine intermediate. Residues 138-158 form a helical membrane-spanning segment; that stretch reads PFLCLLLHAAGVLLHISVLLS. Topologically, residues 159-166 are extracellular; it reads PALSALLQ. Residues 167-187 traverse the membrane as a helical segment; that stretch reads AHSALYTVALLLLPWLMLLTG. Over 188 to 195 the chain is Cytoplasmic; that stretch reads KVSLAQFA. The chain crosses the membrane as a helical span at residues 196 to 216; it reads LAFVVDTCVAGALLCGAGLLF. At 217–284 the chain is on the extracellular side; it reads HGMLLLRGQT…TPTDVGLVTS (68 aa).

This sequence belongs to the DHHC palmitoyltransferase family.

The protein localises to the membrane. The catalysed reaction is L-cysteinyl-[protein] + hexadecanoyl-CoA = S-hexadecanoyl-L-cysteinyl-[protein] + CoA. Probable palmitoyltransferase that could catalyze the addition of palmitate onto various protein substrates. This Rattus norvegicus (Rat) protein is Probable palmitoyltransferase ZDHHC24 (Zdhhc24).